Here is a 261-residue protein sequence, read N- to C-terminus: DNA repair protein RecO (261 aa).

It belongs to the RecO family.

Functionally, involved in DNA repair and RecF pathway recombination. In Chlorobium phaeobacteroides (strain DSM 266 / SMG 266 / 2430), this protein is DNA repair protein RecO.